The chain runs to 464 residues: Glutamate--tRNA ligase (464 aa).

The 'HIGH' region motif lies at 10 to 20 (PSPTGYLHIGG). Positions 113–130 (QEAKKEKPRYDGRWRPEA) are enriched in basic and acidic residues. Residues 113–142 (QEAKKEKPRYDGRWRPEAGKALPVPPTDVP) are disordered. The 'KMSKS' region signature appears at 242-246 (KLSKR). ATP is bound at residue lysine 245.

It belongs to the class-I aminoacyl-tRNA synthetase family. Glutamate--tRNA ligase type 1 subfamily. Monomer.

The protein localises to the cytoplasm. It carries out the reaction tRNA(Glu) + L-glutamate + ATP = L-glutamyl-tRNA(Glu) + AMP + diphosphate. Catalyzes the attachment of glutamate to tRNA(Glu) in a two-step reaction: glutamate is first activated by ATP to form Glu-AMP and then transferred to the acceptor end of tRNA(Glu). This is Glutamate--tRNA ligase from Dechloromonas aromatica (strain RCB).